Here is a 55-residue protein sequence, read N- to C-terminus: Large ribosomal subunit protein bL33 (55 aa).

This sequence belongs to the bacterial ribosomal protein bL33 family.

This is Large ribosomal subunit protein bL33 from Gluconacetobacter diazotrophicus (strain ATCC 49037 / DSM 5601 / CCUG 37298 / CIP 103539 / LMG 7603 / PAl5).